A 754-amino-acid chain; its full sequence is Probable galactinol--sucrose galactosyltransferase 1 (754 aa).

Belongs to the glycosyl hydrolases 36 family.

It carries out the reaction alpha-D-galactosyl-(1-&gt;3)-1D-myo-inositol + sucrose = raffinose + myo-inositol. In terms of biological role, transglycosidase operating by a ping-pong reaction mechanism. Involved in the synthesis of raffinose, a major soluble carbohydrate in seeds, roots and tubers. In Arabidopsis thaliana (Mouse-ear cress), this protein is Probable galactinol--sucrose galactosyltransferase 1 (RFS1).